We begin with the raw amino-acid sequence, 596 residues long: Signal peptide peptidase-like 2B (596 aa).

Positions 1–21 are cleaved as a signal peptide; it reads MAARWAQFLLFSLLSLPQVYC. Residues 22–170 lie on the Lumenal side of the membrane; the sequence is EYGMVHVLSE…APNEPVLDYN (149 aa). The region spanning 53–147 is the PA domain; it reads HDLGKASLLQ…LLSYSDMLDI (95 aa). An N-linked (GlcNAc...) asparagine glycan is attached at Asn93. Residues 171 to 191 form a helical membrane-spanning segment; sequence MVIIFVMAVGTVAIGGYWAGS. Residues 192 to 219 lie on the Cytoplasmic side of the membrane; that stretch reads RDVKERYMKHKRDDGAEKHEDETVDVTP. The helical transmembrane segment at 220-240 threads the bilayer; that stretch reads IMICVFVVMCCSMLVLLYFFY. Residues 241 to 242 are Lumenal-facing; the sequence is DH. A helical transmembrane segment spans residues 243–263; it reads LVYVIIGIFCLAASIGLYSCL. The Cytoplasmic segment spans residues 264–289; it reads SPFVRRFPLGKCRIPDNNLPYFHKRP. A helical transmembrane segment spans residues 290 to 310; it reads QVRILLLAVFCISVSVVWGVF. Topologically, residues 311-315 are lumenal; the sequence is RNEDQ. A helical transmembrane segment spans residues 316 to 336; that stretch reads WAWVLQDALGIAFCLYMLKTI. Topologically, residues 337 to 344 are cytoplasmic; it reads RLPTFKGC. The helical transmembrane segment at 345 to 365 threads the bilayer; sequence TLLLLVLFVYDVFFVFITPFL. Asp355 is an active-site residue. The Lumenal segment spans residues 366-408; sequence TKTGESIMVEVAAGPSDSATHEKLPMVLKVPRLNSSPLALCDR. Residues 409–429 traverse the membrane as a helical segment; that stretch reads PFSLLGFGDILVPGLLVAYCH. Residue Asp417 is part of the active site. The Cytoplasmic segment spans residues 430–441; sequence RFDIQVQSSRVY. Residues 442-462 form a helical membrane-spanning segment; sequence FVACTIAYGIGLLVTFVALAL. Over 463–466 the chain is Lumenal; that stretch reads MQMG. Residues 467 to 487 form a helical membrane-spanning segment; the sequence is QPALLYLVPCTLITSFSVALW. The short motif at 468-470 is the PAL element; it reads PAL. At 488–596 the chain is on the cytoplasmic side; that stretch reads RKELAMFWTG…SLNLEQKQLE (109 aa). Positions 543-596 are disordered; that stretch reads KELHSPTLAAEEPADNDTKTEQSEVSIAQSEEAAGHNKDDLESKSLNLEQKQLE. Positions 575 to 585 are enriched in basic and acidic residues; the sequence is AAGHNKDDLES. A compositionally biased stretch (polar residues) spans 586–596; it reads KSLNLEQKQLE.

It belongs to the peptidase A22B family.

Its subcellular location is the cell membrane. It localises to the golgi apparatus membrane. It is found in the lysosome membrane. The protein resides in the endosome membrane. The protein localises to the membrane. Its function is as follows. Intramembrane-cleaving aspartic protease (I-CLiP) that cleaves type II membrane signal peptides in the hydrophobic plane of the membrane. This chain is Signal peptide peptidase-like 2B, found in Gallus gallus (Chicken).